The primary structure comprises 512 residues: Bifunctional purine biosynthesis protein PurH (512 aa).

The region spanning 1–150 is the MGS-like domain; sequence MIGEERVVRA…KNFPAVLVLV (150 aa).

The protein belongs to the PurH family.

The enzyme catalyses (6R)-10-formyltetrahydrofolate + 5-amino-1-(5-phospho-beta-D-ribosyl)imidazole-4-carboxamide = 5-formamido-1-(5-phospho-D-ribosyl)imidazole-4-carboxamide + (6S)-5,6,7,8-tetrahydrofolate. The catalysed reaction is IMP + H2O = 5-formamido-1-(5-phospho-D-ribosyl)imidazole-4-carboxamide. It functions in the pathway purine metabolism; IMP biosynthesis via de novo pathway; 5-formamido-1-(5-phospho-D-ribosyl)imidazole-4-carboxamide from 5-amino-1-(5-phospho-D-ribosyl)imidazole-4-carboxamide (10-formyl THF route): step 1/1. The protein operates within purine metabolism; IMP biosynthesis via de novo pathway; IMP from 5-formamido-1-(5-phospho-D-ribosyl)imidazole-4-carboxamide: step 1/1. This chain is Bifunctional purine biosynthesis protein PurH, found in Chloroflexus aurantiacus (strain ATCC 29366 / DSM 635 / J-10-fl).